We begin with the raw amino-acid sequence, 34 residues long: Mu-theraphotoxin-Pspp1 (34 aa).

3 cysteine pairs are disulfide-bonded: cysteine 2-cysteine 17, cysteine 9-cysteine 22, and cysteine 16-cysteine 29. At phenylalanine 34 the chain carries Phenylalanine amide.

It belongs to the neurotoxin 10 (Hwtx-1) family. As to expression, expressed by the venom gland.

The protein localises to the secreted. In terms of biological role, voltage-gated sodium channel inhibitor. It is unclear if it selectively inhibits Nav1.7/SCN9A or shows similar potency on all sodium channels tested. According to Escoubas et al., 2006 and Nicolas et al., 2019, it is selective over Nav1.7/SCN9A (90% inhibition at 1 uM), versus Nav1.4 and Nav1.6 (35% inhibition), and shows a small inhibition on all other sodium channels (except Nav1.8/SCN10A). According to Goncalves et al., 2019, it shows a similar inhibition on almost all sodium channels tested (Nav1.1/SCN1A (IC(50)=280.3 nM), Nav1.2/SCN2A (IC(50)=73.7 nM), Nav1.3/SCN3A (IC(50)=201.5 nM), Nav1.4/SCN4A (IC(50)&gt;2100 nM), Nav1.5/SCN5A (IC(50)=710.6 nM), Nav1.6/SCN8A (IC(50)=491.2 nM), and Nav1.7/SCN9A (IC(50)=254.3-260 nM)), except Nav1.8/SCN10A. The voltage-dependence of steady-state Nav1.7/SCN9A channel activation and inactivation are not affected, suggesting that is does not act as a gating-modifier toxin but rather blocks or impedes ion flux through the channel pore. The toxin effect is partial and poorly reversible. In addition to its inhibition to sodium channels, it also shows a small inhibition on rat Kv3.4/KCNC4 potassium channels (20% inhibition at 1 uM). In vivo, when tested on pain models, it shows analgesic activity. The chain is Mu-theraphotoxin-Pspp1 from Phlogiellus sp. (Tarantula).